The chain runs to 372 residues: Glutamate 5-kinase (372 aa).

Lys14 is a binding site for ATP. Residues Ser54, Asp141, and Asn153 each coordinate substrate. An ATP-binding site is contributed by 173 to 174 (TD). One can recognise a PUA domain in the interval 280–358 (RGTLVLDAGA…EAIESILGYS (79 aa)).

Belongs to the glutamate 5-kinase family.

The protein resides in the cytoplasm. The enzyme catalyses L-glutamate + ATP = L-glutamyl 5-phosphate + ADP. Its pathway is amino-acid biosynthesis; L-proline biosynthesis; L-glutamate 5-semialdehyde from L-glutamate: step 1/2. In terms of biological role, catalyzes the transfer of a phosphate group to glutamate to form L-glutamate 5-phosphate. This chain is Glutamate 5-kinase, found in Pseudomonas putida (strain ATCC 700007 / DSM 6899 / JCM 31910 / BCRC 17059 / LMG 24140 / F1).